We begin with the raw amino-acid sequence, 74 residues long: ATP synthase subunit 9, mitochondrial (74 aa).

The next 2 membrane-spanning stretches (helical) occupy residues 8-28 (IGAGAATIALAGAAVGIGNVF) and 50-70 (ILGFALTEAIALFALMMAFLI).

This sequence belongs to the ATPase C chain family. As to quaternary structure, F-type ATPases have 2 components, CF(1) - the catalytic core - and CF(0) - the membrane proton channel. CF(1) has five subunits: alpha(3), beta(3), gamma(1), delta(1), epsilon(1). CF(0) has three main subunits: a, b and c.

Its subcellular location is the mitochondrion membrane. Functionally, this protein is one of the chains of the nonenzymatic membrane component (F0) of mitochondrial ATPase. This is ATP synthase subunit 9, mitochondrial (ATP9) from Triticum aestivum (Wheat).